The following is a 617-amino-acid chain: Glutamyl-tRNA(Gln) amidotransferase subunit B, mitochondrial (617 aa).

A mitochondrion-targeting transit peptide spans 1–56 (MPRIPTSVLGKYLLSGQISRQGCVGARQITRHSALPSAAVSVANSARLLHVSSETV). Residues 53–90 (SETVPPPPAQPVPLRKQLKDEAKKAKKQGKKKSKGDSQ) are disordered. The span at 76–85 (KAKKQGKKKS) shows a compositional bias: basic residues.

Belongs to the GatB/GatE family. GatB subfamily. Subunit of the heterotrimeric GatCAB amidotransferase (AdT) complex, composed of A, B and C subunits.

It localises to the mitochondrion. The enzyme catalyses L-glutamyl-tRNA(Gln) + L-glutamine + ATP + H2O = L-glutaminyl-tRNA(Gln) + L-glutamate + ADP + phosphate + H(+). In terms of biological role, allows the formation of correctly charged Gln-tRNA(Gln) through the transamidation of misacylated Glu-tRNA(Gln) in the mitochondria. The reaction takes place in the presence of glutamine and ATP through an activated gamma-phospho-Glu-tRNA(Gln). In Fusarium vanettenii (strain ATCC MYA-4622 / CBS 123669 / FGSC 9596 / NRRL 45880 / 77-13-4) (Fusarium solani subsp. pisi), this protein is Glutamyl-tRNA(Gln) amidotransferase subunit B, mitochondrial.